The chain runs to 122 residues: Iron-sulfur cluster insertion protein ErpA (122 aa).

Iron-sulfur cluster is bound by residues Cys-50, Cys-114, and Cys-116.

This sequence belongs to the HesB/IscA family. As to quaternary structure, homodimer. Requires iron-sulfur cluster as cofactor.

Functionally, required for insertion of 4Fe-4S clusters for at least IspG. The chain is Iron-sulfur cluster insertion protein ErpA from Alkalilimnicola ehrlichii (strain ATCC BAA-1101 / DSM 17681 / MLHE-1).